The sequence spans 231 residues: Small ribosomal subunit protein uS3 (231 aa).

One can recognise a KH type-2 domain in the interval 39–108; it reads IKNYIKKRYK…EISISVLEVK (70 aa).

The protein belongs to the universal ribosomal protein uS3 family. Part of the 30S ribosomal subunit. Forms a tight complex with proteins S10 and S14.

Binds the lower part of the 30S subunit head. Binds mRNA in the 70S ribosome, positioning it for translation. This chain is Small ribosomal subunit protein uS3, found in Aquifex pyrophilus.